We begin with the raw amino-acid sequence, 598 residues long: Urease subunit alpha (598 aa).

The Urease domain occupies 136–598 (GGLDTHVHWL…APLAQRYFLF (463 aa)). 3 residues coordinate Ni(2+): H141, H143, and K223. An N6-carboxylysine modification is found at K223. Residue H225 coordinates substrate. Residues H252 and H278 each coordinate Ni(2+). H326 (proton donor) is an active-site residue. D366 contributes to the Ni(2+) binding site.

This sequence belongs to the metallo-dependent hydrolases superfamily. Urease alpha subunit family. Heterotrimer of UreA (gamma), UreB (beta) and UreC (alpha) subunits. Three heterotrimers associate to form the active enzyme. Ni cation is required as a cofactor. Carboxylation allows a single lysine to coordinate two nickel ions.

It is found in the cytoplasm. The enzyme catalyses urea + 2 H2O + H(+) = hydrogencarbonate + 2 NH4(+). Its pathway is nitrogen metabolism; urea degradation; CO(2) and NH(3) from urea (urease route): step 1/1. The polypeptide is Urease subunit alpha (Ureaplasma urealyticum serovar 10 (strain ATCC 33699 / Western)).